The chain runs to 104 residues: L-rhamnose mutarotase (104 aa).

Y18 is a substrate binding site. H22 acts as the Proton donor in catalysis. Substrate is bound by residues Y41 and 76–77 (WW).

Belongs to the rhamnose mutarotase family. As to quaternary structure, homodimer.

The protein localises to the cytoplasm. It carries out the reaction alpha-L-rhamnose = beta-L-rhamnose. It participates in carbohydrate metabolism; L-rhamnose metabolism. L-rhamnose mutarotase involved in ulvan degradation. Ulvan is the main polysaccharide component of the Ulvales (green seaweed) cell wall. It is composed of disaccharide building blocks comprising 3-sulfated rhamnose (Rha3S) linked to D-glucuronic acid (GlcA), L-iduronic acid (IduA), or D-xylose (Xyl). L-rhamnose mutarotase catalyzes the anomeric conversion of alpha- to beta-L-rhamnose. This chain is L-rhamnose mutarotase (rhaM), found in Formosa agariphila (strain DSM 15362 / KCTC 12365 / LMG 23005 / KMM 3901 / M-2Alg 35-1).